The following is a 563-amino-acid chain: Testis-expressed basic protein 1 (563 aa).

Residues 3–23 (VLEITLAVILTLLGLAILAIL) traverse the membrane as a helical segment. Residues 56-81 (GSRHAYSTQSDTSYDNRERSKRDYTP) are disordered. Basic and acidic residues predominate over residues 69–79 (YDNRERSKRDY). A helical membrane pass occupies residues 99–119 (ELILLLMCFILALSRSSIGSI). The segment at 311–563 (SEMSIPQGQG…GRKYNKKVEE (253 aa)) is disordered. Residues 367–383 (QVEKSEMGVPRRQESQV) show a composition bias toward basic and acidic residues. Over residues 384-395 (KKSQSGVSKGQE) the composition is skewed to low complexity. 2 stretches are compositionally biased toward basic and acidic residues: residues 412-447 (QVEK…KKSE) and 485-544 (EAQE…EKSK).

Its subcellular location is the membrane. This chain is Testis-expressed basic protein 1, found in Homo sapiens (Human).